Here is an 87-residue protein sequence, read N- to C-terminus: Lantipeptide prochlorosin 3.3 (87 aa).

The propeptide occupies 1–64; the sequence is MSEEQLKAFI…DEELEAASGG (64 aa). A 2,3-didehydrobutyrine modification is found at threonine 67. A cross-link (beta-methyllanthionine (Thr-Cys)) is located at residues 75-85; sequence TAGCYGGTKMC. A cross-link (beta-methyllanthionine (Cys-Thr)) is located at residues 78-82; the sequence is CYGGT.

Cross-links are proved in vitro, when coepressed in E.coli with the ProcM lanthionine synthetase. Post-translationally, the beta-methyllanthionine residues have a DL configuration (with 2S,3S,6R stereochemistry). In terms of processing, maturation of prochlorosin involves the enzymatic conversion of Thr, and Ser into dehydrated AA and the formation of thioether bonds with cysteines. This is followed by membrane translocation and cleavage of the modified precursor.

Its subcellular location is the secreted. Lanthionine-containing peptide (lantipeptide) with unknown function. Does not show antibiotic activity against Lactococcus lactis 117 and Bacillus subtilis 6633 bacteria. Organisms that produce this peptide live in oligotrophic environments at very dilute concentrations, suggesting this peptide is not secreted to influence other bacteria. The chain is Lantipeptide prochlorosin 3.3 from Prochlorococcus marinus (strain MIT 9313).